The sequence spans 733 residues: SWR1-complex protein 4 (733 aa).

Disordered stretches follow at residues 1 to 34 (MTSHDVRDVLNLPSDHAGPRPSKKARTATPRPNL) and 98 to 128 (PDGTVQDGSAEGQDSAATADNSADKPEDSSF). Residues 146–217 (NTNLKHPDWT…DLKARYYEVA (72 aa)) enclose the SANT domain. Residues 247 to 299 (KQEQNRKRFAENTLKRSSDEAREEEALLLEIKRIMARTERFNEERRELYNRLD) are a coiled coil. Over residues 371 to 384 (AASRRESLAASSTA) the composition is skewed to low complexity. 2 disordered regions span residues 371–488 (AASR…GSGP) and 564–733 (KKAE…KQKK). 4 stretches are compositionally biased toward basic and acidic residues: residues 387-423 (NDHHEPPVREPPVRHERQESRSHHRNESRSERADRHG), 463-484 (PERRKLSEHEEQVYGVSHHDRL), 564-589 (KKAERERAAREAAEARGETVEKKGGE), and 610-653 (DDAK…KGEE). Over residues 699–710 (GSSSGAGASSGA) the composition is skewed to low complexity.

Belongs to the SWC4 family. In terms of assembly, component of the SWR1 chromatin-remodeling complex and of the NuA4 histone acetyltransferase complex.

The protein resides in the nucleus. Component of the SWR1 complex which mediates the ATP-dependent exchange of histone H2A for the H2A variant H2A.Z leading to transcriptional regulation of selected genes by chromatin remodeling. Component of the NuA4 histone acetyltransferase complex which is involved in transcriptional activation of selected genes principally by acetylation of nucleosomal histone H4 and H2A. The NuA4 complex is also involved in DNA repair. The chain is SWR1-complex protein 4 (crc-1) from Neurospora crassa (strain ATCC 24698 / 74-OR23-1A / CBS 708.71 / DSM 1257 / FGSC 987).